The primary structure comprises 117 residues: Immunoglobulin heavy variable 3-30-3 (117 aa).

The first 19 residues, 1–19, serve as a signal peptide directing secretion; that stretch reads MEFGLSWVFLVALLRGVQC. At glutamine 20 the chain carries Pyrrolidone carboxylic acid. The tract at residues 20 to 44 is framework-1; that stretch reads QVQLVESGGGVVQPGRSLRLSCAAS. The region spanning 20–117 is the Ig-like domain; that stretch reads QVQLVESGGG…EDTAVYYCAR (98 aa). The cysteines at positions 41 and 115 are disulfide-linked. The segment at 45–52 is complementarity-determining-1; sequence GFTFSSYA. The tract at residues 53–69 is framework-2; that stretch reads MHWVRQAPGKGLEWVAV. Residues 70–77 form a complementarity-determining-2 region; that stretch reads ISYDGSNK. The interval 78–115 is framework-3; it reads YYADSVKGRFTISRDNSKNTLYLQMNSLRAEDTAVYYC. Positions 116–117 are complementarity-determining-3; sequence AR.

Immunoglobulins are composed of two identical heavy chains and two identical light chains; disulfide-linked.

It localises to the secreted. The protein localises to the cell membrane. V region of the variable domain of immunoglobulin heavy chains that participates in the antigen recognition. Immunoglobulins, also known as antibodies, are membrane-bound or secreted glycoproteins produced by B lymphocytes. In the recognition phase of humoral immunity, the membrane-bound immunoglobulins serve as receptors which, upon binding of a specific antigen, trigger the clonal expansion and differentiation of B lymphocytes into immunoglobulins-secreting plasma cells. Secreted immunoglobulins mediate the effector phase of humoral immunity, which results in the elimination of bound antigens. The antigen binding site is formed by the variable domain of one heavy chain, together with that of its associated light chain. Thus, each immunoglobulin has two antigen binding sites with remarkable affinity for a particular antigen. The variable domains are assembled by a process called V-(D)-J rearrangement and can then be subjected to somatic hypermutations which, after exposure to antigen and selection, allow affinity maturation for a particular antigen. The protein is Immunoglobulin heavy variable 3-30-3 of Homo sapiens (Human).